Consider the following 223-residue polypeptide: Probable transaldolase (223 aa).

Lys86 serves as the catalytic Schiff-base intermediate with substrate.

It belongs to the transaldolase family. Type 3B subfamily.

The protein resides in the cytoplasm. It catalyses the reaction D-sedoheptulose 7-phosphate + D-glyceraldehyde 3-phosphate = D-erythrose 4-phosphate + beta-D-fructose 6-phosphate. Its pathway is carbohydrate degradation; pentose phosphate pathway; D-glyceraldehyde 3-phosphate and beta-D-fructose 6-phosphate from D-ribose 5-phosphate and D-xylulose 5-phosphate (non-oxidative stage): step 2/3. Functionally, transaldolase is important for the balance of metabolites in the pentose-phosphate pathway. This Thermoplasma volcanium (strain ATCC 51530 / DSM 4299 / JCM 9571 / NBRC 15438 / GSS1) protein is Probable transaldolase (tal).